We begin with the raw amino-acid sequence, 427 residues long: Putative F-box protein At3g44060 (427 aa).

The F-box domain occupies 1 to 46 (MDCLPDDLLVQILYLLPTKEAVSTSVLSKRWRTLFTRSDNLDFHDP).

The protein is Putative F-box protein At3g44060 of Arabidopsis thaliana (Mouse-ear cress).